The following is a 201-amino-acid chain: MELTITGSGKGISVSDAAFAKDFNEALVHQVVTAYMAAGRQGTKAQKTRSEVSGGGKKPWRQKGTGRARAGTIRSPIWRSGGVTFAAKPRDFEQKVNRKMYRAAMRSIFSELVRQERLVVVDDMNVDTPKTKAFTAKLSDLGVSNALILSENVEQNLHLASRNVPHVDVRDVAGLDPVSLVAFEKVVVTVPALKKIEEMLG.

The segment at 39–70 (GRQGTKAQKTRSEVSGGGKKPWRQKGTGRARA) is disordered.

It belongs to the universal ribosomal protein uL4 family. In terms of assembly, part of the 50S ribosomal subunit.

In terms of biological role, one of the primary rRNA binding proteins, this protein initially binds near the 5'-end of the 23S rRNA. It is important during the early stages of 50S assembly. It makes multiple contacts with different domains of the 23S rRNA in the assembled 50S subunit and ribosome. Its function is as follows. Forms part of the polypeptide exit tunnel. The sequence is that of Large ribosomal subunit protein uL4 from Marinobacter nauticus (strain ATCC 700491 / DSM 11845 / VT8) (Marinobacter aquaeolei).